A 77-amino-acid polypeptide reads, in one-letter code: Large ribosomal subunit protein uL29 (77 aa).

This sequence belongs to the universal ribosomal protein uL29 family.

This chain is Large ribosomal subunit protein uL29, found in Mycolicibacterium smegmatis (strain ATCC 700084 / mc(2)155) (Mycobacterium smegmatis).